Consider the following 433-residue polypeptide: 3-phosphoshikimate 1-carboxyvinyltransferase (433 aa).

3 residues coordinate 3-phosphoshikimate: K21, S22, and R26. Residue K21 participates in phosphoenolpyruvate binding. G96 and R124 together coordinate phosphoenolpyruvate. 3-phosphoshikimate contacts are provided by S167, S168, Q169, S195, D310, and K337. Q169 lines the phosphoenolpyruvate pocket. D310 functions as the Proton acceptor in the catalytic mechanism. R341, R384, and K410 together coordinate phosphoenolpyruvate.

Belongs to the EPSP synthase family. As to quaternary structure, monomer.

It localises to the cytoplasm. The enzyme catalyses 3-phosphoshikimate + phosphoenolpyruvate = 5-O-(1-carboxyvinyl)-3-phosphoshikimate + phosphate. The protein operates within metabolic intermediate biosynthesis; chorismate biosynthesis; chorismate from D-erythrose 4-phosphate and phosphoenolpyruvate: step 6/7. Functionally, catalyzes the transfer of the enolpyruvyl moiety of phosphoenolpyruvate (PEP) to the 5-hydroxyl of shikimate-3-phosphate (S3P) to produce enolpyruvyl shikimate-3-phosphate and inorganic phosphate. In Clostridium botulinum (strain Alaska E43 / Type E3), this protein is 3-phosphoshikimate 1-carboxyvinyltransferase.